The sequence spans 109 residues: Large ribosomal subunit protein uL1 (109 aa).

Belongs to the universal ribosomal protein uL1 family. In terms of assembly, part of the 50S ribosomal subunit.

Functionally, binds directly to 23S rRNA. The L1 stalk is quite mobile in the ribosome, and is involved in E site tRNA release. Protein L1 is also a translational repressor protein, it controls the translation of the L11 operon by binding to its mRNA. This chain is Large ribosomal subunit protein uL1 (rplA), found in Aquifex pyrophilus.